Here is a 144-residue protein sequence, read N- to C-terminus: D-aminoacyl-tRNA deacylase (144 aa).

Positions 136 to 137 (GP) match the Gly-cisPro motif, important for rejection of L-amino acids motif.

The protein belongs to the DTD family. In terms of assembly, homodimer.

The protein resides in the cytoplasm. The enzyme catalyses glycyl-tRNA(Ala) + H2O = tRNA(Ala) + glycine + H(+). It carries out the reaction a D-aminoacyl-tRNA + H2O = a tRNA + a D-alpha-amino acid + H(+). An aminoacyl-tRNA editing enzyme that deacylates mischarged D-aminoacyl-tRNAs. Also deacylates mischarged glycyl-tRNA(Ala), protecting cells against glycine mischarging by AlaRS. Acts via tRNA-based rather than protein-based catalysis; rejects L-amino acids rather than detecting D-amino acids in the active site. By recycling D-aminoacyl-tRNA to D-amino acids and free tRNA molecules, this enzyme counteracts the toxicity associated with the formation of D-aminoacyl-tRNA entities in vivo and helps enforce protein L-homochirality. The polypeptide is D-aminoacyl-tRNA deacylase (Mannheimia succiniciproducens (strain KCTC 0769BP / MBEL55E)).